Here is a 454-residue protein sequence, read N- to C-terminus: tRNA modification GTPase MnmE (454 aa).

Residues arginine 23, glutamate 80, and lysine 120 each coordinate (6S)-5-formyl-5,6,7,8-tetrahydrofolate. The 162-residue stretch at 216–377 (GMKVVIAGRP…LRNHLKQSMG (162 aa)) folds into the TrmE-type G domain. Asparagine 226 is a K(+) binding site. GTP-binding positions include 226–231 (NAGKSS), 245–251 (TDIAGTT), 270–273 (DTAG), 335–338 (NKAD), and 358–360 (SAR). Serine 230 lines the Mg(2+) pocket. Residues threonine 245, isoleucine 247, and threonine 250 each coordinate K(+). Residue threonine 251 coordinates Mg(2+). (6S)-5-formyl-5,6,7,8-tetrahydrofolate is bound at residue lysine 454.

It belongs to the TRAFAC class TrmE-Era-EngA-EngB-Septin-like GTPase superfamily. TrmE GTPase family. In terms of assembly, homodimer. Heterotetramer of two MnmE and two MnmG subunits. Requires K(+) as cofactor.

The protein localises to the cytoplasm. Functionally, exhibits a very high intrinsic GTPase hydrolysis rate. Involved in the addition of a carboxymethylaminomethyl (cmnm) group at the wobble position (U34) of certain tRNAs, forming tRNA-cmnm(5)s(2)U34. The chain is tRNA modification GTPase MnmE from Salmonella gallinarum (strain 287/91 / NCTC 13346).